Reading from the N-terminus, the 253-residue chain is Aminoglycoside nucleotidyltransferase (4') (253 aa).

Positions 1–127 are N-terminal domain; sequence MNGPIIMTRE…KVYQTAKSVE (127 aa). ATP contacts are provided by serine 39, arginine 42, serine 49, aspartate 50, and glutamate 52. Mg(2+) contacts are provided by aspartate 50 and glutamate 52. 2 residues coordinate neomycin B: glutamate 52 and glutamate 67. Residues glutamate 67, lysine 74, glutamate 76, glutamate 141, and glutamate 145 each coordinate kanamycin A. The interval 128-241 is C-terminal domain; that stretch reads AQTFHDAICA…NGIQEWTERH (114 aa). Positions 145, 149, and 187 each coordinate ATP. Glutamate 145 lines the Mg(2+) pocket. The Proton acceptor role is filled by glutamate 145.

As to quaternary structure, homodimer. The cofactor is Mg(2+).

The catalysed reaction is amikacin + ATP = 4'-adenylylamikacin + diphosphate. It carries out the reaction kanamycin A + ATP = 4'-adenylylkanamycin A + diphosphate. It catalyses the reaction neomycin B + ATP = 4'-adenylylneomycin B + diphosphate. The enzyme catalyses paromomycin + ATP = 4'-adenylylparomomycin + diphosphate. The catalysed reaction is ribostamycin + ATP = 4'-adenylylribostamycin + diphosphate. It carries out the reaction tobramycin + ATP = 4'-adenylyltobramycin + diphosphate. It catalyses the reaction kanamycin A + CTP = 4'-cytidylylkanamycin A + diphosphate. The enzyme catalyses kanamycin A + GTP = 4'-guanylylkanamycin A + diphosphate. The catalysed reaction is kanamycin A + ITP = 4'-inosinylylkanamycin A + diphosphate. It carries out the reaction dTTP + kanamycin A = 4'-thymidylylkanamycin A + diphosphate. It catalyses the reaction kanamycin A + UTP = 4'-uridylylkanamycin A + diphosphate. The enzyme catalyses kanamycin A + dATP = 4'-(2'-deoxyadenylyl)kanamycin A + diphosphate. The catalysed reaction is kanamycin A + dCTP = 4'-(2'-deoxycytidylyl)kanamycin A + diphosphate. It carries out the reaction kanamycin A + dGTP = 4'-(2'-deoxyguanylyl)kanamycin A + diphosphate. It catalyses the reaction dUTP + kanamycin A = 4'-(2'-deoxyuridylyl)kanamycin A + diphosphate. The enzyme catalyses amikacin + GTP = 4'-guanylylamikacin + diphosphate. The catalysed reaction is amikacin + ITP = 4'-inosinylylamikacin + diphosphate. It carries out the reaction amikacin + CTP = 4'-cytidylylamikacin + diphosphate. It catalyses the reaction amikacin + UTP = 4'-uridylylamikacin + diphosphate. The enzyme catalyses amikacin + dTTP = 4'-thymidylylamikacin + diphosphate. Its function is as follows. Inactivates aminoglycoside antibiotics such as kanamycin by catalyzing the transfer of a nucleotidyl group from a wide variety of nucleoside triphosphates ((d)ATP, (d)CTP, (d)GTP, ITP, TTP and (d)UTP) to the 4'-hydroxyl group of the aminoglycoside. In vitro, antibiotics without the 4'-hydroxyl but possessing a 4''-hydroxyl group (e.g. sisomicin and gentamicin) are also modifed but with poor specificity. The 3' position of the NTP ribose ring does not tolerate large substitutions (e.g. ddATP) and dNTPs and TTP are better substrates than their NTP counterparts. A short (2.35 Angstrom) hydrogen bond initially facilitates tight binding of the substrate (between Glu-52 and antibiotic) that is subsequently disrupted by the assembly of the active ternary complex. This enables the release of products post-catalysis, a 'catch and release' mechanism. The polypeptide is Aminoglycoside nucleotidyltransferase (4') (knt) (Staphylococcus aureus).